The primary structure comprises 217 residues: Uracil-DNA glycosylase (217 aa).

The Proton acceptor role is filled by aspartate 62.

The protein belongs to the uracil-DNA glycosylase (UDG) superfamily. UNG family.

Its subcellular location is the cytoplasm. It catalyses the reaction Hydrolyzes single-stranded DNA or mismatched double-stranded DNA and polynucleotides, releasing free uracil.. Functionally, excises uracil residues from the DNA which can arise as a result of misincorporation of dUMP residues by DNA polymerase or due to deamination of cytosine. This Streptococcus equi subsp. equi (strain 4047) protein is Uracil-DNA glycosylase.